A 283-amino-acid polypeptide reads, in one-letter code: GTPase Era (283 aa).

The Era-type G domain maps to 7 to 175; it reads YCGHVIIVGK…KNIIKSYLPE (169 aa). The tract at residues 15–22 is G1; the sequence is GKANVGKS. Residue 15-22 coordinates GTP; sequence GKANVGKS. Positions 41 to 45 are G2; sequence NTTQS. Residues 62–65 form a G3 region; it reads DTPG. GTP contacts are provided by residues 62-66 and 124-127; these read DTPGV and NKID. Residues 124-127 form a G4 region; it reads NKID. Residues 154–156 form a G5 region; the sequence is ISA. A KH type-2 domain is found at 198–283; that stretch reads IREQLILFLG…HLVLWVKDKN (86 aa).

The protein belongs to the TRAFAC class TrmE-Era-EngA-EngB-Septin-like GTPase superfamily. Era GTPase family. Monomer.

It localises to the cytoplasm. The protein resides in the cell membrane. Functionally, an essential GTPase that binds both GDP and GTP, with rapid nucleotide exchange. Plays a role in 16S rRNA processing and 30S ribosomal subunit biogenesis and possibly also in cell cycle regulation and energy metabolism. The chain is GTPase Era from Buchnera aphidicola subsp. Acyrthosiphon pisum (strain Tuc7).